Reading from the N-terminus, the 186-residue chain is Ribosome-recycling factor (186 aa).

It belongs to the RRF family.

It is found in the cytoplasm. Functionally, responsible for the release of ribosomes from messenger RNA at the termination of protein biosynthesis. May increase the efficiency of translation by recycling ribosomes from one round of translation to another. The chain is Ribosome-recycling factor from Brucella melitensis biotype 2 (strain ATCC 23457).